The sequence spans 101 residues: Urease subunit beta (101 aa).

The protein belongs to the urease beta subunit family. As to quaternary structure, heterotrimer of UreA (gamma), UreB (beta) and UreC (alpha) subunits. Three heterotrimers associate to form the active enzyme.

The protein localises to the cytoplasm. It catalyses the reaction urea + 2 H2O + H(+) = hydrogencarbonate + 2 NH4(+). The protein operates within nitrogen metabolism; urea degradation; CO(2) and NH(3) from urea (urease route): step 1/1. This chain is Urease subunit beta, found in Psychromonas ingrahamii (strain DSM 17664 / CCUG 51855 / 37).